A 389-amino-acid chain; its full sequence is Chalcone synthase 1 (389 aa).

The active site involves cysteine 164.

It belongs to the thiolase-like superfamily. Chalcone/stilbene synthases family.

The catalysed reaction is (E)-4-coumaroyl-CoA + 3 malonyl-CoA + 3 H(+) = 2',4,4',6'-tetrahydroxychalcone + 3 CO2 + 4 CoA. It functions in the pathway secondary metabolite biosynthesis; flavonoid biosynthesis. The primary product of this enzyme is 4,2',4',6'-tetrahydroxychalcone (also termed naringenin-chalcone or chalcone) which can under specific conditions spontaneously isomerize into naringenin. The protein is Chalcone synthase 1 (CHS1) of Camellia sinensis (Tea plant).